The following is a 414-amino-acid chain: Lysosome-associated membrane glycoprotein 1 (414 aa).

A signal peptide spans 1 to 18 (MGGAARAVLLGFLQASSS). A first lumenal domain region spans residues 19 to 181 (FDVRDSTGKV…SANKTECRED (163 aa)). Residues 19–379 (FDVRDSTGKV…EECQLDENNM (361 aa)) lie on the Lumenal side of the membrane. The cysteines at positions 29 and 67 are disulfide-linked. N-linked (GlcNAc...) asparagine glycosylation is found at N33, N58, N71, N90, N108, N117, N154, N159, N168, and N174. A disulfide bridge connects residues C142 and C178. A hinge region spans residues 182–224 (MVSTTTVAPTTPKHATSQVPTTSPAPTAAPSSPAVGKYNVTGA). The segment at 186–213 (TTVAPTTPKHATSQVPTTSPAPTAAPSS) is disordered. The span at 196–213 (ATSQVPTTSPAPTAAPSS) shows a compositional bias: low complexity. N-linked (GlcNAc...) asparagine glycosylation is found at N220, N225, N238, N259, N289, N301, and N319. The segment at 225–379 (NGTCVLASMG…EECQLDENNM (155 aa)) is second lumenal domain. C228 and C266 are joined by a disulfide. C335 and C372 form a disulfide bridge. The helical transmembrane segment at 380–403 (LIPIIVGAALAGLVLIVLIAYLIG) threads the bilayer. Topologically, residues 404 to 414 (RKRSHAGYQTI) are cytoplasmic.

It belongs to the LAMP family.

The protein resides in the lysosome membrane. It localises to the endosome membrane. Its subcellular location is the late endosome membrane. The protein localises to the cell membrane. It is found in the cytolytic granule membrane. Functionally, lysosomal membrane glycoprotein which plays an important role in lysosome biogenesis, lysosomal pH regulation, autophagy and cholesterol homeostasis. In terms of biological role, (Microbial infection) Plays an essential role in efficient replication and spread of Marek's disease virus, by facilitating viral cell-to-cell spread. This is Lysosome-associated membrane glycoprotein 1 (LAMP1) from Gallus gallus (Chicken).